We begin with the raw amino-acid sequence, 665 residues long: Intraflagellar transport protein 70A (665 aa).

TPR repeat units lie at residues 11–44 (DGEFTALVYRLIRDARYAEAVQLLGRELQRSPRS), 45–78 (RAGLSLLGYCYYRLQEFALAAECYEQLGQLHPEL), 154–187 (TDGQVNLGCLLYKEGQYEAACSKFSATLQASGYQ), 189–221 (DLSYNLALAYYSSRQYASALKHIAEIIERGIRQ), 393–424 (LTKQVQEARHNRDDEAIKKAVNEYDETMEKYI), 425–457 (PVLMAQAKIYWNLENYPMVEKVFRKSVEFCNDH), and 459–492 (VWKLNVAHVLFMQENKYKEAIGFYEPIVKKHYDN). Residues 508 to 535 (YIMTSQNEEAEELMRKIEKEEEQLSYDD) adopt a coiled-coil conformation. The stretch at 544–577 (CIVNLVIGTLYCAKGNYEFGISRVIKSLEPYNKK) is one TPR 8 repeat.

This sequence belongs to the TTC30/dfy-1/fleer family.

It is found in the cell projection. Its subcellular location is the cilium. In terms of biological role, required for polyglutamylation of axonemal tubulin. Plays a role in anterograde intraflagellar transport (IFT), the process by which cilia precursors are transported from the base of the cilium to the site of their incorporation at the tip. This chain is Intraflagellar transport protein 70A, found in Homo sapiens (Human).